A 132-amino-acid chain; its full sequence is Small ribosomal subunit protein uS8 (132 aa).

Belongs to the universal ribosomal protein uS8 family. In terms of assembly, part of the 30S ribosomal subunit. Contacts proteins S5 and S12.

In terms of biological role, one of the primary rRNA binding proteins, it binds directly to 16S rRNA central domain where it helps coordinate assembly of the platform of the 30S subunit. The polypeptide is Small ribosomal subunit protein uS8 (Geotalea daltonii (strain DSM 22248 / JCM 15807 / FRC-32) (Geobacter daltonii)).